The following is a 236-amino-acid chain: tRNA (guanine-N(7)-)-methyltransferase (236 aa).

S-adenosyl-L-methionine-binding residues include Glu43, Asp68, Asn102, and Asn125. Residues Lys129 and Asp161 each contribute to the substrate site.

Belongs to the class I-like SAM-binding methyltransferase superfamily. TrmB family.

It carries out the reaction guanosine(46) in tRNA + S-adenosyl-L-methionine = N(7)-methylguanosine(46) in tRNA + S-adenosyl-L-homocysteine. It functions in the pathway tRNA modification; N(7)-methylguanine-tRNA biosynthesis. In terms of biological role, catalyzes the formation of N(7)-methylguanine at position 46 (m7G46) in tRNA. This Ruminiclostridium cellulolyticum (strain ATCC 35319 / DSM 5812 / JCM 6584 / H10) (Clostridium cellulolyticum) protein is tRNA (guanine-N(7)-)-methyltransferase.